The chain runs to 338 residues: Methionine import ATP-binding protein MetN 1 (338 aa).

Residues 2-241 enclose the ABC transporter domain; sequence IELHQVSKSF…AKHATTKRFV (240 aa). 38 to 45 lines the ATP pocket; sequence GYSGAGKS.

This sequence belongs to the ABC transporter superfamily. Methionine importer (TC 3.A.1.24) family. The complex is composed of two ATP-binding proteins (MetN), two transmembrane proteins (MetI) and a solute-binding protein (MetQ).

It is found in the cell membrane. It carries out the reaction L-methionine(out) + ATP + H2O = L-methionine(in) + ADP + phosphate + H(+). The enzyme catalyses D-methionine(out) + ATP + H2O = D-methionine(in) + ADP + phosphate + H(+). Functionally, part of the ABC transporter complex MetNIQ involved in methionine import. Responsible for energy coupling to the transport system. The chain is Methionine import ATP-binding protein MetN 1 from Listeria monocytogenes serovar 1/2a (strain ATCC BAA-679 / EGD-e).